The chain runs to 240 residues: Eukaryotic translation initiation factor 3 subunit J (240 aa).

Residues 19–95 (KADVNKWAGE…FANMTPEQQL (77 aa)) are disordered. Residues 28-45 (EDEDDVKDNWEDDDEEEE) show a composition bias toward acidic residues. A compositionally biased stretch (basic and acidic residues) spans 46-56 (KKDAPKQEDTP). Residues 60-71 (AKPKKAAQQKKL) show a composition bias toward basic residues. 2 coiled-coil regions span residues 63-90 (KKAAQQKKLKKEDLERLQREEEEFANMT) and 176-235 (SNNI…DYDD). Positions 72–81 (KKEDLERLQR) are enriched in basic and acidic residues.

The protein belongs to the eIF-3 subunit J family. Component of the eukaryotic translation initiation factor 3 (eIF-3) complex.

It localises to the cytoplasm. Component of the eukaryotic translation initiation factor 3 (eIF-3) complex, which is involved in protein synthesis of a specialized repertoire of mRNAs and, together with other initiation factors, stimulates binding of mRNA and methionyl-tRNAi to the 40S ribosome. The eIF-3 complex specifically targets and initiates translation of a subset of mRNAs involved in cell proliferation. The polypeptide is Eukaryotic translation initiation factor 3 subunit J (Anopheles gambiae (African malaria mosquito)).